The chain runs to 149 residues: Large ribosomal subunit protein bL9 (149 aa).

It belongs to the bacterial ribosomal protein bL9 family.

In terms of biological role, binds to the 23S rRNA. This is Large ribosomal subunit protein bL9 from Alkaliphilus metalliredigens (strain QYMF).